A 518-amino-acid chain; its full sequence is Zinc finger protein 449 (518 aa).

The 83-residue stretch at 30–112 (RQRFRQFQYR…SLIEDLQREL (83 aa)) folds into the SCAN box domain. Residues 292-304 (NPTLGETPENSNL) show a composition bias toward polar residues. Positions 292–325 (NPTLGETPENSNLEEPLNPKPHKKKSPGEKPHRC) are disordered. 7 C2H2-type zinc fingers span residues 323-345 (HRCPQCGKCFARKSQLTGHQRIH), 351-373 (HKCPECGKRFLRSSDLYRHQRLH), 379-401 (YECTVCKKRFTRRSHLIGHQRTH), 407-429 (YKCLECGKSFCHGSSLKRHLKTH), 435-457 (HRCHNCGKSFSRLTALTLHQRTH), 463-485 (FKCNYCGKSFRQRPSLVIHLRIH), and 491-513 (YKCTHCSKSFRQRAGLIMHQVTH).

It belongs to the krueppel C2H2-type zinc-finger protein family.

The protein localises to the nucleus. May be involved in transcriptional regulation. This Pan troglodytes (Chimpanzee) protein is Zinc finger protein 449 (ZNF449).